A 398-amino-acid chain; its full sequence is MEIGTPLFEGAKKLLWLGGGELGKEMVIEAQRMGVETVVIDRYDLAPAMHVAHRKYVVNMHDGGAIESIIRKERPDAVIAEIEAINTETLSKIEMDGIKVMPNARAVKICMDRIELRRFAAEKVKVPTTAYGFATSPEEVKKMCKDVGYPCIIKPQMSSSGHGHEVIYDESQVEEKFKEALTHARGKSKTVIVEEYVKIDRELTVLTYRYPLSSGGVATKTIYPVEHQRPQGVYHYIESWHPATVSQDVISKASEYATKVVNELGGFGIFGVEIMIAGNRVLFNEVAPRPHDTGLVTLVSSDISEFQVHVRSALGLPTPDVKVVTPAAAHVILASGEKWAPKYINVDKALEIPGVQVRLFGKPVTYNERRMGIVLATGNSVEEAKEKVRKASALILVS.

N(1)-(5-phospho-beta-D-ribosyl)glycinamide contacts are provided by residues 21–22 and E81; that span reads EL. ATP contacts are provided by residues R113, K154, 194–197, and E202; that span reads EEYV. In terms of domain architecture, ATP-grasp spans 118–314; that stretch reads RFAAEKVKVP…EFQVHVRSAL (197 aa). The Mg(2+) site is built by E273 and E285. N(1)-(5-phospho-beta-D-ribosyl)glycinamide contacts are provided by residues D292, K362, and 369 to 370; that span reads RR.

Belongs to the PurK/PurT family. Homodimer.

The catalysed reaction is N(1)-(5-phospho-beta-D-ribosyl)glycinamide + formate + ATP = N(2)-formyl-N(1)-(5-phospho-beta-D-ribosyl)glycinamide + ADP + phosphate + H(+). It functions in the pathway purine metabolism; IMP biosynthesis via de novo pathway; N(2)-formyl-N(1)-(5-phospho-D-ribosyl)glycinamide from N(1)-(5-phospho-D-ribosyl)glycinamide (formate route): step 1/1. Involved in the de novo purine biosynthesis. Catalyzes the transfer of formate to 5-phospho-ribosyl-glycinamide (GAR), producing 5-phospho-ribosyl-N-formylglycinamide (FGAR). Formate is provided by PurU via hydrolysis of 10-formyl-tetrahydrofolate. This chain is Formate-dependent phosphoribosylglycinamide formyltransferase, found in Sulfolobus acidocaldarius (strain ATCC 33909 / DSM 639 / JCM 8929 / NBRC 15157 / NCIMB 11770).